Here is a 130-residue protein sequence, read N- to C-terminus: Large-conductance mechanosensitive channel (130 aa).

A run of 2 helical transmembrane segments spans residues 14–34 and 73–93; these read IIDLAVAVVIGGAFGAIVTSF and FVDFIIIAFSIFLAIKFLVKF.

It belongs to the MscL family. Homopentamer.

It is found in the cell membrane. Channel that opens in response to stretch forces in the membrane lipid bilayer. May participate in the regulation of osmotic pressure changes within the cell. The protein is Large-conductance mechanosensitive channel of Oceanobacillus iheyensis (strain DSM 14371 / CIP 107618 / JCM 11309 / KCTC 3954 / HTE831).